We begin with the raw amino-acid sequence, 161 residues long: Periplasmic chaperone Spy (161 aa).

Residues 1-23 (MRKLTALFVASTLALGAANLAHA) form the signal peptide. The tract at residues 140 to 161 (ANFEKRLTERPAAKGKMPATAE) is disordered. Positions 142–151 (FEKRLTERPA) are enriched in basic and acidic residues.

Belongs to the CpxP/Spy family. As to quaternary structure, homodimer.

Its subcellular location is the periplasm. An ATP-independent periplasmic chaperone, decreases protein aggregation and helps protein refolding. Binds substrate over a large region of its convex inner surface. Substrate protein folds while it is bound to chaperone. Increasing Spy flexibility increases its substrate affinity and overall chaperone activity (shown for 3 different substrates). Protects proteins in vitro against tannin inactivation; tannins have antimicrobial activity. Overexpression enhances the stability of otherwise unstable periplasmic proteins. The sequence is that of Periplasmic chaperone Spy from Escherichia coli (strain K12).